Here is a 292-residue protein sequence, read N- to C-terminus: Protein/nucleic acid deglycase HchA (292 aa).

The segment covering M1–P12 has biased composition (polar residues). The interval M1–F23 is disordered. C190 (nucleophile) is an active-site residue.

Belongs to the peptidase C56 family. HchA subfamily.

It is found in the cytoplasm. The catalysed reaction is N(omega)-(1-hydroxy-2-oxopropyl)-L-arginyl-[protein] + H2O = lactate + L-arginyl-[protein] + H(+). The enzyme catalyses N(6)-(1-hydroxy-2-oxopropyl)-L-lysyl-[protein] + H2O = lactate + L-lysyl-[protein] + H(+). It carries out the reaction S-(1-hydroxy-2-oxopropyl)-L-cysteinyl-[protein] + H2O = lactate + L-cysteinyl-[protein] + H(+). It catalyses the reaction N(omega)-(1-hydroxy-2-oxoethyl)-L-arginyl-[protein] + H2O = L-arginyl-[protein] + glycolate + H(+). The catalysed reaction is N(6)-(1-hydroxy-2-oxoethyl)-L-lysyl-[protein] + H2O = glycolate + L-lysyl-[protein] + H(+). The enzyme catalyses S-(1-hydroxy-2-oxoethyl)-L-cysteinyl-[protein] + H2O = glycolate + L-cysteinyl-[protein] + H(+). It carries out the reaction N(2)-(1-hydroxy-2-oxopropyl)-dGTP + H2O = lactate + dGTP + H(+). It catalyses the reaction N(2)-(1-hydroxy-2-oxopropyl)-GTP + H2O = lactate + GTP + H(+). The catalysed reaction is N(2)-(1-hydroxy-2-oxopropyl)-GDP + H2O = lactate + GDP + H(+). The enzyme catalyses N(2)-(1-hydroxy-2-oxopropyl)-GMP + H2O = lactate + GMP + H(+). It carries out the reaction N(2)-(1-hydroxy-2-oxoethyl)-dGTP + H2O = dGTP + glycolate + H(+). It catalyses the reaction N(2)-(1-hydroxy-2-oxoethyl)-GTP + H2O = glycolate + GTP + H(+). The catalysed reaction is N(2)-(1-hydroxy-2-oxoethyl)-GDP + H2O = glycolate + GDP + H(+). The enzyme catalyses N(2)-(1-hydroxy-2-oxoethyl)-GMP + H2O = glycolate + GMP + H(+). It carries out the reaction an N(2)-(1-hydroxy-2-oxopropyl)-guanosine in RNA + H2O = a guanosine in RNA + lactate + H(+). It catalyses the reaction an N(2)-(1-hydroxy-2-oxopropyl)-2'-deoxyguanosine in DNA + H2O = a 2'-deoxyguanosine in DNA + lactate + H(+). The catalysed reaction is an N(2)-(1-hydroxy-2-oxoethyl)-guanosine in RNA + H2O = a guanosine in RNA + glycolate + H(+). The enzyme catalyses an N(2)-(1-hydroxy-2-oxoethyl)-2'-deoxyguanosine in DNA + H2O = a 2'-deoxyguanosine in DNA + glycolate + H(+). Its function is as follows. Protein and nucleotide deglycase that catalyzes the deglycation of the Maillard adducts formed between amino groups of proteins or nucleotides and reactive carbonyl groups of glyoxals. Thus, functions as a protein deglycase that repairs methylglyoxal- and glyoxal-glycated proteins, and releases repaired proteins and lactate or glycolate, respectively. Deglycates cysteine, arginine and lysine residues in proteins, and thus reactivates these proteins by reversing glycation by glyoxals. Acts on early glycation intermediates (hemithioacetals and aminocarbinols), preventing the formation of Schiff bases and advanced glycation endproducts (AGE). Also functions as a nucleotide deglycase able to repair glycated guanine in the free nucleotide pool (GTP, GDP, GMP, dGTP) and in DNA and RNA. Is thus involved in a major nucleotide repair system named guanine glycation repair (GG repair), dedicated to reversing methylglyoxal and glyoxal damage via nucleotide sanitization and direct nucleic acid repair. Plays an important role in protecting cells from carbonyl stress. This is Protein/nucleic acid deglycase HchA from Staphylococcus aureus (strain Mu3 / ATCC 700698).